The sequence spans 278 residues: Orotidine 5'-phosphate decarboxylase (278 aa).

Lys95 functions as the Proton donor in the catalytic mechanism.

This sequence belongs to the OMP decarboxylase family. Type 2 subfamily.

It carries out the reaction orotidine 5'-phosphate + H(+) = UMP + CO2. The protein operates within pyrimidine metabolism; UMP biosynthesis via de novo pathway; UMP from orotate: step 2/2. The polypeptide is Orotidine 5'-phosphate decarboxylase (Corynebacterium glutamicum (strain ATCC 13032 / DSM 20300 / JCM 1318 / BCRC 11384 / CCUG 27702 / LMG 3730 / NBRC 12168 / NCIMB 10025 / NRRL B-2784 / 534)).